The chain runs to 125 residues: Small ribosomal subunit protein uS13 (125 aa).

Belongs to the universal ribosomal protein uS13 family. In terms of assembly, part of the 30S ribosomal subunit. Forms a loose heterodimer with protein S19. Forms two bridges to the 50S subunit in the 70S ribosome.

In terms of biological role, located at the top of the head of the 30S subunit, it contacts several helices of the 16S rRNA. In the 70S ribosome it contacts the 23S rRNA (bridge B1a) and protein L5 of the 50S subunit (bridge B1b), connecting the 2 subunits; these bridges are implicated in subunit movement. Contacts the tRNAs in the A and P-sites. The polypeptide is Small ribosomal subunit protein uS13 (Granulibacter bethesdensis (strain ATCC BAA-1260 / CGDNIH1)).